A 125-amino-acid polypeptide reads, in one-letter code: Photosystem I reaction center subunit IV, chloroplastic (125 aa).

The N-terminal 34 residues, 1-34 (MASIASSVAVRLGLTQVLPNKNFSSPRSTRLVVR), are a transit peptide targeting the chloroplast. A compositionally biased stretch (low complexity) spans 42 to 57 (APAAASPEGEAPKAAA). Residues 42 to 68 (APAAASPEGEAPKAAAKPPPIGPKRGS) form a disordered region.

The protein belongs to the PsaE family.

Its subcellular location is the plastid. It localises to the chloroplast thylakoid membrane. Stabilizes the interaction between PsaC and the PSI core, assists the docking of the ferredoxin to PSI and interacts with ferredoxin-NADP oxidoreductase. This is Photosystem I reaction center subunit IV, chloroplastic (PSAE-1) from Spinacia oleracea (Spinach).